The chain runs to 238 residues: Ubiquinone biosynthesis O-methyltransferase (238 aa).

Arg-40, Gly-59, Asp-81, and Met-126 together coordinate S-adenosyl-L-methionine.

The protein belongs to the methyltransferase superfamily. UbiG/COQ3 family.

The catalysed reaction is a 3-demethylubiquinol + S-adenosyl-L-methionine = a ubiquinol + S-adenosyl-L-homocysteine + H(+). It carries out the reaction a 3-(all-trans-polyprenyl)benzene-1,2-diol + S-adenosyl-L-methionine = a 2-methoxy-6-(all-trans-polyprenyl)phenol + S-adenosyl-L-homocysteine + H(+). The protein operates within cofactor biosynthesis; ubiquinone biosynthesis. O-methyltransferase that catalyzes the 2 O-methylation steps in the ubiquinone biosynthetic pathway. This is Ubiquinone biosynthesis O-methyltransferase from Neisseria meningitidis serogroup A / serotype 4A (strain DSM 15465 / Z2491).